A 374-amino-acid polypeptide reads, in one-letter code: Chaperone protein DnaJ (374 aa).

The 66-residue stretch at 5 to 70 (DYYEILGVSR…QKRAAYDQYG (66 aa)) folds into the J domain. Residues 129 to 207 (GVTREIRIPT…CHGHGRVEKS (79 aa)) form a CR-type zinc finger. Zn(2+) contacts are provided by Cys142, Cys145, Cys159, Cys162, Cys181, Cys184, Cys195, and Cys198. CXXCXGXG motif repeat units follow at residues 142–149 (CDVCHGSG), 159–166 (CPTCHGQG), 181–188 (CPTCQGQG), and 195–202 (CTKCHGHG).

The protein belongs to the DnaJ family. As to quaternary structure, homodimer. Zn(2+) is required as a cofactor.

It localises to the cytoplasm. Participates actively in the response to hyperosmotic and heat shock by preventing the aggregation of stress-denatured proteins and by disaggregating proteins, also in an autonomous, DnaK-independent fashion. Unfolded proteins bind initially to DnaJ; upon interaction with the DnaJ-bound protein, DnaK hydrolyzes its bound ATP, resulting in the formation of a stable complex. GrpE releases ADP from DnaK; ATP binding to DnaK triggers the release of the substrate protein, thus completing the reaction cycle. Several rounds of ATP-dependent interactions between DnaJ, DnaK and GrpE are required for fully efficient folding. Also involved, together with DnaK and GrpE, in the DNA replication of plasmids through activation of initiation proteins. The polypeptide is Chaperone protein DnaJ (Sodalis glossinidius (strain morsitans)).